A 72-amino-acid polypeptide reads, in one-letter code: Translation initiation factor IF-1 2 (72 aa).

One can recognise an S1-like domain in the interval methionine 1–lysine 72.

The protein belongs to the IF-1 family. As to quaternary structure, component of the 30S ribosomal translation pre-initiation complex which assembles on the 30S ribosome in the order IF-2 and IF-3, IF-1 and N-formylmethionyl-tRNA(fMet); mRNA recruitment can occur at any time during PIC assembly.

It is found in the cytoplasm. In terms of biological role, one of the essential components for the initiation of protein synthesis. Stabilizes the binding of IF-2 and IF-3 on the 30S subunit to which N-formylmethionyl-tRNA(fMet) subsequently binds. Helps modulate mRNA selection, yielding the 30S pre-initiation complex (PIC). Upon addition of the 50S ribosomal subunit IF-1, IF-2 and IF-3 are released leaving the mature 70S translation initiation complex. In Nitratidesulfovibrio vulgaris (strain DP4) (Desulfovibrio vulgaris), this protein is Translation initiation factor IF-1 2.